We begin with the raw amino-acid sequence, 168 residues long: Endoribonuclease YbeY (168 aa).

Residues H127, H131, and H137 each contribute to the Zn(2+) site.

The protein belongs to the endoribonuclease YbeY family. The cofactor is Zn(2+).

It localises to the cytoplasm. Its function is as follows. Single strand-specific metallo-endoribonuclease involved in late-stage 70S ribosome quality control and in maturation of the 3' terminus of the 16S rRNA. The chain is Endoribonuclease YbeY from Chromobacterium violaceum (strain ATCC 12472 / DSM 30191 / JCM 1249 / CCUG 213 / NBRC 12614 / NCIMB 9131 / NCTC 9757 / MK).